Here is a 639-residue protein sequence, read N- to C-terminus: MSNHSDQIVKKYILNQSFVESSFFTKLSELKLEKYKLDSSYIAIHGFQTHPTKLNKFNDTPVLNLDQSSFDDTLNDSRINIPGELFNVNTIEEFKSLDKLKLLNTWGQNVYSEVTNATSFDYKLFNKFYILTYSDLKKYKFYYWVAYPTLSNTWTVESESQETDTTITQLVETELDNEYGQFFQYYGGKLHKSVQADKEHTFVFIDTCLSKDRKPSSQLKNYLYFIAYKGIKEIDLVTYRNNNLSFTQHLKLDAFTDSPKISGWERTNQGKLGPKLADLGSLINPLQLAEQAVELNLKLMKWRIAPDIDLEIIKKQKVLLLGAGTLGSYVARALLGWGVRSITFVDSGRISFSNPVRQPLFNFEDCFSDSGQGEYKALRAAENLKRVFPGVDAKGICLAVPMVGHPVTDEHKERENYETLVKLFEEHDVIFLLMDSRESRWLPTLIGAANEKIVINAALGFDSYLVMRHGVTNQKDRLGCYYCNDVVAPNDSLSDRTLDQMCTVTRPGGALMASSLAVELLVAILQHPERNLAPHDAETKFGNIPHQIRGFLHNFQQTKLFAPSYVHCSACSPRVITEFKQEGWEFVRKCLDDSQYLEDISGLTKVQQEAELAAKQLLEDLSLDDDVSNDIDEDSEWLS.

The GXGXXG motif motif lies at 322–327; the sequence is GAGTLG. The active-site Glycyl thioester intermediate is the Cys502.

The protein belongs to the ATG7 family. In terms of assembly, homodimer.

Its subcellular location is the cytoplasm. The protein resides in the preautophagosomal structure. Its function is as follows. E1-like activating enzyme involved in the 2 ubiquitin-like systems required for cytoplasm to vacuole transport (Cvt) and autophagy. Activates ATG12 for its conjugation with ATG5 and ATG8 for its conjugation with phosphatidylethanolamine. Both systems are needed for the ATG8 association to Cvt vesicles and autophagosomes membranes. Autophagy is essential for maintenance of amino acid levels and protein synthesis under nitrogen starvation. Required for selective autophagic degradation of the nucleus (nucleophagy) as well as for mitophagy which contributes to regulate mitochondrial quantity and quality by eliminating the mitochondria to a basal level to fulfill cellular energy requirements and preventing excess ROS production. Plays a role in the regulation of filamentous growth and chronological longevity. The sequence is that of Ubiquitin-like modifier-activating enzyme ATG7 (APG7) from Candida albicans (strain SC5314 / ATCC MYA-2876) (Yeast).